The sequence spans 154 residues: Protein X (154 aa).

Residues 68-117 are mitochondrial targeting sequence; it reads PCALRFTSARCMETTVNAPRNLPKVLHKRTLGLSTMSTTGIETYFKDCVF.

Belongs to the orthohepadnavirus protein X family. In terms of assembly, may form homodimer. May interact with host CEBPA, CFLAR, CREB1, DDB1, E4F1, HBXIP, HSPD1/HSP60, NFKBIA, POLR2E and SMAD4. Interacts with host SMC5-SMC6 complex and induces its degradation. Interacts with host TRPC4AP; leading to prevent ubiquitination of TRPC4AP. Interacts with host PLSCR1; this interaction promotes ubiquitination and degradation of HBx and impairs HBx-mediated cell proliferation. A fraction may be phosphorylated in insect cells and HepG2 cells, a human hepatoblastoma cell line. Phosphorylated in vitro by host protein kinase C or mitogen-activated protein kinase. N-acetylated in insect cells.

It localises to the host cytoplasm. Its subcellular location is the host nucleus. The protein resides in the host mitochondrion. Its function is as follows. Multifunctional protein that plays a role in silencing host antiviral defenses and promoting viral transcription. Does not seem to be essential for HBV infection. May be directly involved in development of cirrhosis and liver cancer (hepatocellular carcinoma). Most of cytosolic activities involve modulation of cytosolic calcium. The effect on apoptosis is controversial depending on the cell types in which the studies have been conducted. May induce apoptosis by localizing in mitochondria and causing loss of mitochondrial membrane potential. May also modulate apoptosis by binding host CFLAR, a key regulator of the death-inducing signaling complex (DISC). Promotes viral transcription by using the host E3 ubiquitin ligase DDB1 to target the SMC5-SMC6 complex to proteasomal degradation. This host complex would otherwise bind to viral episomal DNA, and prevents its transcription. Moderately stimulates transcription of many different viral and cellular transcription elements. Promoters and enhancers stimulated by HBx contain DNA binding sites for NF-kappa-B, AP-1, AP-2, c-EBP, ATF/CREB, or the calcium-activated factor NF-AT. This Orangutan hepatitis B virus (isolate Somad) (HBVoru) protein is Protein X.